The chain runs to 887 residues: Phosphatidylinositol 3-kinase catalytic subunit type 3 (887 aa).

Residues 35–184 (YKAVLEDPML…LAKLTKAHRQ (150 aa)) form the C2 PI3K-type domain. Residues 149-170 (VEADGSEPTRTPGRTSSTLSED) are disordered. Residues 156 to 170 (PTRTPGRTSSTLSED) are compositionally biased toward polar residues. The residue at position 163 (Thr-163) is a Phosphothreonine; by AMPK. Phosphoserine; by AMPK is present on Ser-165. A phosphoserine mark is found at Ser-244, Ser-261, and Ser-282. In terms of domain architecture, PIK helical spans 283–520 (DHDLKPNATT…PKTHEMYLNV (238 aa)). Residues 416 to 467 (EPTKKDSQASVSESLSSSGVSSADIDSSQIITNPLPPVASPPPASKSKEVSD) form a disordered region. The span at 423-444 (QASVSESLSSSGVSSADIDSSQ) shows a compositional bias: low complexity. A compositionally biased stretch (pro residues) spans 449–459 (PLPPVASPPPA). Residues 605–871 (IPETATLFKS…LIDESVHALF (267 aa)) form the PI3K/PI4K catalytic domain. Residues 611–617 (LFKSALM) are G-loop. A catalytic loop region spans residues 740 to 748 (GVGDRHLDN). The activation loop stretch occupies residues 759 to 780 (HIDFGYILGRDPKPLPPPMKLN).

This sequence belongs to the PI3/PI4-kinase family. In terms of assembly, component of the PI3K (PI3KC3/PI3K-III/class III phosphatidylinositol 3-kinase) complex the core of which is composed of the catalytic subunit PIK3C3, the regulatory subunit PIK3R4 and BECN1 associating with additional regulatory/auxiliary subunits to form alternative complex forms. Alternative complex forms containing a fourth regulatory subunit in a mutually exclusive manner are: the PI3K complex I (PI3KC3-C1) containing ATG14, and the PI3K complex II (PI3KC3-C2) containing UVRAG. PI3KC3-C1 displays a V-shaped architecture with PIK3R4 serving as a bridge between PIK3C3 and the ATG14:BECN1 subcomplex. Both, PI3KC3-C1 and PI3KC3-C2, can associate with further regulatory subunits such as RUBCN, SH3GLB1/Bif-1 and AMBRA1. PI3KC3-C1 probably associates with PIK3CB. Interacts with RAB7A in the presence of PIK3R4. Interacts with AMBRA1. Interacts with BECN1P1/BECN2. Interacts with SLAMF1. May interact with DYN2. May be a component of a complex composed of RAB5A (in GDP-bound form), DYN2 and PIK3C3. Interacts with NCKAP1L. Interacts with ATG14; this interaction is increased in the absence of TMEM39A. Interacts with STEEP1; the interaction is STING1-dependent and required for trafficking of STING1 from the endoplasmic reticulum. Interacts with YWHAG. Interacts with ARMC3. The cofactor is Mn(2+). In terms of processing, ubiquitinated via 'Lys-29'- and 'Lys-48'-linked ubiquitination by UBE3C, promoting its degradation. Deubiquitination by ZRANB1/TRABID promotes its stabilization, leading to autophagosome maturation.

Its subcellular location is the midbody. It is found in the late endosome. The protein localises to the cytoplasmic vesicle. It localises to the autophagosome. The catalysed reaction is a 1,2-diacyl-sn-glycero-3-phospho-(1D-myo-inositol) + ATP = a 1,2-diacyl-sn-glycero-3-phospho-(1D-myo-inositol-3-phosphate) + ADP + H(+). Catalytic subunit of the PI3K complex that mediates formation of phosphatidylinositol 3-phosphate; different complex forms are believed to play a role in multiple membrane trafficking pathways: PI3KC3-C1 is involved in initiation of autophagosomes and PI3KC3-C2 in maturation of autophagosomes and endocytosis. As part of PI3KC3-C1, promotes endoplasmic reticulum membrane curvature formation prior to vesicle budding. Involved in regulation of degradative endocytic trafficking and required for the abscission step in cytokinesis, probably in the context of PI3KC3-C2. Involved in the transport of lysosomal enzyme precursors to lysosomes. Required for transport from early to late endosomes. The sequence is that of Phosphatidylinositol 3-kinase catalytic subunit type 3 from Rattus norvegicus (Rat).